Here is a 154-residue protein sequence, read N- to C-terminus: Low molecular weight protein-tyrosine-phosphatase PtpA (154 aa).

Residue C8 is the Nucleophile of the active site. The active site involves R14. The active-site Proton donor is D120.

This sequence belongs to the low molecular weight phosphotyrosine protein phosphatase family. Interacts with host CORO1A. Post-translationally, phosphorylations at Tyr-122 and Tyr-123 are essential for phosphatase activity.

The protein resides in the secreted. The catalysed reaction is O-phospho-L-tyrosyl-[protein] + H2O = L-tyrosyl-[protein] + phosphate. Secreted tyrosine phosphatase that plays a critical role during infection as a bacterial effector protein that counteracts host defenses. Required for intramacrophage survival. The protein is Low molecular weight protein-tyrosine-phosphatase PtpA (ptpA) of Staphylococcus aureus (strain bovine RF122 / ET3-1).